The sequence spans 210 residues: Large ribosomal subunit protein bL25 (210 aa).

The segment at 190 to 210 is disordered; sequence LKSEGAEGGEAEAGQAEEGEE. A compositionally biased stretch (acidic residues) spans 196–210; it reads EGGEAEAGQAEEGEE.

It belongs to the bacterial ribosomal protein bL25 family. CTC subfamily. In terms of assembly, part of the 50S ribosomal subunit; part of the 5S rRNA/L5/L18/L25 subcomplex. Contacts the 5S rRNA. Binds to the 5S rRNA independently of L5 and L18.

This is one of the proteins that binds to the 5S RNA in the ribosome where it forms part of the central protuberance. The chain is Large ribosomal subunit protein bL25 from Chelativorans sp. (strain BNC1).